An 89-amino-acid chain; its full sequence is Co-chaperonin GroES (89 aa).

Belongs to the GroES chaperonin family. Heptamer of 7 subunits arranged in a ring. Interacts with the chaperonin GroEL.

It localises to the cytoplasm. Its function is as follows. Together with the chaperonin GroEL, plays an essential role in assisting protein folding. The GroEL-GroES system forms a nano-cage that allows encapsulation of the non-native substrate proteins and provides a physical environment optimized to promote and accelerate protein folding. GroES binds to the apical surface of the GroEL ring, thereby capping the opening of the GroEL channel. The protein is Co-chaperonin GroES of Fervidobacterium nodosum (strain ATCC 35602 / DSM 5306 / Rt17-B1).